A 182-amino-acid chain; its full sequence is Avenin-E (182 aa).

Residues 21-26 (PFVQQQ) form a 1; approximate repeat. A 3 X 7 AA tandem repeats of P-F-V-Q-Q-Q-Q region spans residues 21–41 (PFVQQQPFVQQQQQPFVQQQQ). The 2; approximate repeat unit spans residues 27–34 (PFVQQQQQ). The stretch at 35 to 41 (PFVQQQQ) is repeat 3.

It belongs to the gliadin/glutenin family. As to quaternary structure, monomer.

It is found in the vacuole. Its subcellular location is the aleurone grain. Functionally, seed storage protein. Serves as a source of nitrogen, carbon, and sulfur for the young developing seedling. This Avena sativa (Oat) protein is Avenin-E.